The primary structure comprises 1290 residues: Structural maintenance of chromosomes protein 4 (1290 aa).

Residues 1-48 (MPPKKTKTSTAVAREATESPMAERSRAPDALQADPPAPTQESNNELVD) are disordered. The segment covering 15-27 (EATESPMAERSRA) has biased composition (basic and acidic residues). Position 107 to 114 (107 to 114 (GPNGSGKS)) interacts with ATP. Residues 264–594 (LCRRVELLNE…SANRSRGKVL (331 aa)) are a coiled coil. The 115-residue stretch at 607-721 (PGIFGRLGDL…ANNLDQATRV (115 aa)) folds into the SMC hinge domain. Coiled-coil stretches lie at residues 764-1027 (EISD…SKIK) and 1094-1129 (EELY…LNEF).

Belongs to the SMC family. SMC4 subfamily. In terms of assembly, forms a heterodimer with XCAP-E/SMC2. Component of the condensin complex, which contains the XCAP-E/SMC2 and XCAP-C/SMC4 heterodimer, and three non SMC subunits that probably regulate the complex: XCAP-H/BRRN1, XCAP-D2/CNAP1 and XCAP-G/CAPG.

The protein resides in the nucleus. It localises to the cytoplasm. Its subcellular location is the chromosome. Central component of the condensin complex, a complex required for conversion of interphase chromatin into mitotic-like condense chromosomes. The condensin complex probably introduces positive supercoils into relaxed DNA in the presence of type I topoisomerases and converts nicked DNA into positive knotted forms in the presence of type II topoisomerase. The polypeptide is Structural maintenance of chromosomes protein 4 (smc4) (Xenopus laevis (African clawed frog)).